Here is a 246-residue protein sequence, read N- to C-terminus: tRNA pseudouridine synthase A (246 aa).

The Nucleophile role is filled by Asp51. Residue Tyr105 participates in substrate binding.

Belongs to the tRNA pseudouridine synthase TruA family.

The catalysed reaction is uridine(38/39/40) in tRNA = pseudouridine(38/39/40) in tRNA. Its function is as follows. Formation of pseudouridine at positions 38, 39 and 40 in the anticodon stem and loop of transfer RNAs. In Thermoplasma volcanium (strain ATCC 51530 / DSM 4299 / JCM 9571 / NBRC 15438 / GSS1), this protein is tRNA pseudouridine synthase A.